We begin with the raw amino-acid sequence, 95 residues long: Integration host factor subunit beta (95 aa).

Belongs to the bacterial histone-like protein family. In terms of assembly, heterodimer of an alpha and a beta chain.

Functionally, this protein is one of the two subunits of integration host factor, a specific DNA-binding protein that functions in genetic recombination as well as in transcriptional and translational control. This chain is Integration host factor subunit beta, found in Klebsiella pneumoniae (strain 342).